Consider the following 53-residue polypeptide: uncharacterized protein (53 aa).

This sequence belongs to the ycf15 family.

The protein resides in the plastid. Its subcellular location is the chloroplast. This is an uncharacterized protein from Helianthus annuus (Common sunflower).